The following is a 417-amino-acid chain: UPF0761 membrane protein CV_0810 (417 aa).

Transmembrane regions (helical) follow at residues 52 to 72 (LLAL…FPVF), 79 to 99 (FKIM…ITVY), 110 to 130 (LTAA…STIE), 150 to 170 (MVYW…LLSW), 185 to 205 (LLAS…VLAL), 214 to 234 (FVPF…LELT), and 258 to 278 (IPIF…GAVF).

This sequence belongs to the UPF0761 family.

It localises to the cell inner membrane. The polypeptide is UPF0761 membrane protein CV_0810 (Chromobacterium violaceum (strain ATCC 12472 / DSM 30191 / JCM 1249 / CCUG 213 / NBRC 12614 / NCIMB 9131 / NCTC 9757 / MK)).